A 341-amino-acid chain; its full sequence is S-adenosylmethionine:tRNA ribosyltransferase-isomerase (341 aa).

It belongs to the QueA family. Monomer.

It is found in the cytoplasm. The enzyme catalyses 7-aminomethyl-7-carbaguanosine(34) in tRNA + S-adenosyl-L-methionine = epoxyqueuosine(34) in tRNA + adenine + L-methionine + 2 H(+). It functions in the pathway tRNA modification; tRNA-queuosine biosynthesis. Its function is as follows. Transfers and isomerizes the ribose moiety from AdoMet to the 7-aminomethyl group of 7-deazaguanine (preQ1-tRNA) to give epoxyqueuosine (oQ-tRNA). This is S-adenosylmethionine:tRNA ribosyltransferase-isomerase from Chlorobium chlorochromatii (strain CaD3).